A 351-amino-acid chain; its full sequence is GTPase Obg (351 aa).

Positions 1-159 constitute an Obg domain; sequence MKFLDQAKVY…RWIWLRLKLI (159 aa). An OBG-type G domain is found at 160–328; that stretch reads ADVGLVGLPN…LCGSAWDIVL (169 aa). Residues 166–173, 191–195, 213–216, 280–283, and 309–311 each bind GTP; these read GLPNAGKS, FTTLY, DIPG, NKID, and SGV. Mg(2+)-binding residues include Ser173 and Thr193.

It belongs to the TRAFAC class OBG-HflX-like GTPase superfamily. OBG GTPase family. In terms of assembly, monomer. Mg(2+) serves as cofactor.

The protein localises to the cytoplasm. Its function is as follows. An essential GTPase which binds GTP, GDP and possibly (p)ppGpp with moderate affinity, with high nucleotide exchange rates and a fairly low GTP hydrolysis rate. Plays a role in control of the cell cycle, stress response, ribosome biogenesis and in those bacteria that undergo differentiation, in morphogenesis control. In Maricaulis maris (strain MCS10) (Caulobacter maris), this protein is GTPase Obg.